We begin with the raw amino-acid sequence, 1018 residues long: Importin-9 (1018 aa).

The Importin N-terminal domain maps to 35–114 (TEKRIKQLEY…RNILPNGLYD (80 aa)). The segment at 921–950 (GKSDEPLTDSEEDGDDEDAPGNPDKPRYIS) is disordered. The segment covering 926-939 (PLTDSEEDGDDEDA) has biased composition (acidic residues).

The protein belongs to the importin beta family.

Its subcellular location is the cytoplasm. The protein resides in the nucleus. In terms of biological role, nuclear transport receptor that mediates nuclear import of proteins. Serves as receptor for nuclear localization signals (NLS) in cargo substrates. Is thought to mediate docking of the importin/substrate complex to the nuclear pore complex (NPC) through binding to nucleoporin and the complex is subsequently translocated through the pore by an energy requiring, Ran-dependent mechanism. Mediates the import of pre-assembled proteasomes into the nucleus during the late stages of sperm development. This chain is Importin-9, found in Drosophila melanogaster (Fruit fly).